The sequence spans 67 residues: Large ribosomal subunit protein uL29 (67 aa).

It belongs to the universal ribosomal protein uL29 family.

This is Large ribosomal subunit protein uL29 from Wolbachia pipientis subsp. Culex pipiens (strain wPip).